Reading from the N-terminus, the 479-residue chain is Hydrogenase-4 component D (479 aa).

15 helical membrane passes run 3–23, 30–50, 55–75, 80–100, 117–137, 168–188, 208–228, 238–258, 270–290, 300–320, 330–350, 369–389, 390–410, 411–431, and 458–478; these read NLALTTLLLPFIGALVVSFSP, WGVLFAALTTLCMLSLISAFY, VAVTLTLVNVGDVALFGLVID, LILFVVVFLGLLVTIYSTGYL, AFLLVFIGAMAGLVLSSTLLG, ALLITHIGSLGLYLAAATLFL, LVYGGILFAAWGKSAQLPMQA, TPISAYLHAASMVKVGVYIFA, VIGGVGMVMALVTILYGFLMY, LAWSTITQLGWMFFGLSLSIF, IAYIVNHAFAKSLFFLVAGAL, LPLPGVGFCVAALAITGVPPF, NGFFSKFPLFAAGFALSVEYW, ILLPAMILLMIESVASFAWFI, and LVLIVLIVMSLISSVIAATWL.

The protein belongs to the complex I subunit 5 family.

The protein resides in the cell inner membrane. Possible component of hydrogenase 4. The chain is Hydrogenase-4 component D from Escherichia coli (strain K12).